We begin with the raw amino-acid sequence, 335 residues long: Probable nicotianamine synthase 3 (335 aa).

This sequence belongs to the nicotianamine synthase (NAS)-like family.

The catalysed reaction is 3 S-adenosyl-L-methionine = nicotianamine + 3 S-methyl-5'-thioadenosine + 3 H(+). Functionally, synthesizes nicotianamine, a polyamine that is the first intermediate in the synthesis of the phytosiderophores of the mugineic acid type found in gramineae which serves as a sensor for the physiological iron status within the plant, and/or might be involved in the transport of iron. This Hordeum vulgare (Barley) protein is Probable nicotianamine synthase 3 (NAS3).